The primary structure comprises 351 residues: L-threonine 3-dehydrogenase (351 aa).

Cys42 contributes to the Zn(2+) binding site. Catalysis depends on charge relay system residues Thr44 and His47. 6 residues coordinate Zn(2+): His67, Glu68, Cys97, Cys100, Cys103, and Cys111. Residues Ile179, Asp199, Arg204, 266–268 (LGL), and 291–292 (IT) contribute to the NAD(+) site.

Belongs to the zinc-containing alcohol dehydrogenase family. In terms of assembly, homotetramer. Requires Zn(2+) as cofactor.

It localises to the cytoplasm. The catalysed reaction is L-threonine + NAD(+) = (2S)-2-amino-3-oxobutanoate + NADH + H(+). It participates in amino-acid degradation; L-threonine degradation via oxydo-reductase pathway; glycine from L-threonine: step 1/2. Catalyzes the NAD(+)-dependent oxidation of L-threonine to 2-amino-3-ketobutyrate. The protein is L-threonine 3-dehydrogenase of Symbiobacterium thermophilum (strain DSM 24528 / JCM 14929 / IAM 14863 / T).